Here is a 218-residue protein sequence, read N- to C-terminus: 1-Cys peroxiredoxin (218 aa).

The Thioredoxin domain occupies 4 to 164 (LTIGDTIPDL…VLRVVESLQK (161 aa)). The active-site Cysteine sulfenic acid (-SOH) intermediate is the Cys46. The Bipartite nuclear localization signal signature appears at 194–217 (KEMFPQGFKTADLPSKKEYLRFTN).

The protein belongs to the peroxiredoxin family. Prx6 subfamily.

It localises to the nucleus. The protein localises to the cytoplasm. It carries out the reaction a hydroperoxide + [thioredoxin]-dithiol = an alcohol + [thioredoxin]-disulfide + H2O. Functionally, thiol-specific peroxidase that catalyzes the reduction of hydrogen peroxide and organic hydroperoxides to water and alcohols, respectively. Seems to contribute to the inhibition of germination during stress. The polypeptide is 1-Cys peroxiredoxin (Medicago truncatula (Barrel medic)).